The primary structure comprises 682 residues: Potassium-transporting ATPase ATP-binding subunit (682 aa).

The next 4 helical transmembrane spans lie at 35–55 (VMFI…AMAG), 62–82 (ATFT…ANFA), 219–239 (IALT…TATI), and 254–274 (VLVA…LSAI). Residue D307 is the 4-aspartylphosphate intermediate of the active site. ATP is bound by residues D344, E348, 377 to 384 (FTAQTRMS), and K395. Residues D518 and D522 each coordinate Mg(2+). 3 helical membrane passes run 588–608 (FAII…LNVM), 616–636 (AILS…PLAL), and 656–676 (IYGL…DLLL).

It belongs to the cation transport ATPase (P-type) (TC 3.A.3) family. Type IA subfamily. The system is composed of three essential subunits: KdpA, KdpB and KdpC.

The protein resides in the cell inner membrane. It catalyses the reaction K(+)(out) + ATP + H2O = K(+)(in) + ADP + phosphate + H(+). Part of the high-affinity ATP-driven potassium transport (or Kdp) system, which catalyzes the hydrolysis of ATP coupled with the electrogenic transport of potassium into the cytoplasm. This subunit is responsible for energy coupling to the transport system and for the release of the potassium ions to the cytoplasm. This Klebsiella pneumoniae (strain 342) protein is Potassium-transporting ATPase ATP-binding subunit.